Here is a 547-residue protein sequence, read N- to C-terminus: 2-succinyl-5-enolpyruvyl-6-hydroxy-3-cyclohexene-1-carboxylate synthase (547 aa).

It belongs to the TPP enzyme family. MenD subfamily. Homodimer. Mg(2+) is required as a cofactor. The cofactor is Mn(2+). Requires thiamine diphosphate as cofactor.

It catalyses the reaction isochorismate + 2-oxoglutarate + H(+) = 5-enolpyruvoyl-6-hydroxy-2-succinyl-cyclohex-3-ene-1-carboxylate + CO2. The protein operates within quinol/quinone metabolism; 1,4-dihydroxy-2-naphthoate biosynthesis; 1,4-dihydroxy-2-naphthoate from chorismate: step 2/7. It participates in quinol/quinone metabolism; menaquinone biosynthesis. Catalyzes the thiamine diphosphate-dependent decarboxylation of 2-oxoglutarate and the subsequent addition of the resulting succinic semialdehyde-thiamine pyrophosphate anion to isochorismate to yield 2-succinyl-5-enolpyruvyl-6-hydroxy-3-cyclohexene-1-carboxylate (SEPHCHC). The polypeptide is 2-succinyl-5-enolpyruvyl-6-hydroxy-3-cyclohexene-1-carboxylate synthase (Mycobacterium sp. (strain KMS)).